Here is a 122-residue protein sequence, read N- to C-terminus: Large ribosomal subunit protein uL14 (122 aa).

Belongs to the universal ribosomal protein uL14 family. As to quaternary structure, part of the 50S ribosomal subunit. Forms a cluster with proteins L3 and L19. In the 70S ribosome, L14 and L19 interact and together make contacts with the 16S rRNA in bridges B5 and B8.

In terms of biological role, binds to 23S rRNA. Forms part of two intersubunit bridges in the 70S ribosome. The chain is Large ribosomal subunit protein uL14 from Nautilia profundicola (strain ATCC BAA-1463 / DSM 18972 / AmH).